A 556-amino-acid chain; its full sequence is Formate--tetrahydrofolate ligase (556 aa).

An ATP-binding site is contributed by 65–72; the sequence is TPAGEGKS.

This sequence belongs to the formate--tetrahydrofolate ligase family.

It catalyses the reaction (6S)-5,6,7,8-tetrahydrofolate + formate + ATP = (6R)-10-formyltetrahydrofolate + ADP + phosphate. Its pathway is one-carbon metabolism; tetrahydrofolate interconversion. In Streptococcus agalactiae serotype III (strain NEM316), this protein is Formate--tetrahydrofolate ligase.